A 146-amino-acid chain; its full sequence is UPF0178 protein R01393 (146 aa).

It belongs to the UPF0178 family.

This Rhizobium meliloti (strain 1021) (Ensifer meliloti) protein is UPF0178 protein R01393.